A 101-amino-acid polypeptide reads, in one-letter code: ATP-dependent Clp protease adapter protein ClpS (101 aa).

Belongs to the ClpS family. As to quaternary structure, binds to the N-terminal domain of the chaperone ClpA.

Functionally, involved in the modulation of the specificity of the ClpAP-mediated ATP-dependent protein degradation. The protein is ATP-dependent Clp protease adapter protein ClpS of Clostridium acetobutylicum (strain ATCC 824 / DSM 792 / JCM 1419 / IAM 19013 / LMG 5710 / NBRC 13948 / NRRL B-527 / VKM B-1787 / 2291 / W).